The following is a 323-amino-acid chain: Extracellular endo-alpha-(1-&gt;5)-L-arabinanase 1 (323 aa).

An N-terminal signal peptide occupies residues 1 to 32 (MKKKKTWKRFLHFSSAALAAGLIFTSAAPAEA). Catalysis depends on D44, which acts as the Proton acceptor. Substrate is bound at residue D44. D107 contributes to the Ca(2+) binding site. Residues G125 and 160–163 (NAID) each bind substrate. E165 is a Ca(2+) binding site. 180-182 (SFW) provides a ligand contact to substrate. E215 acts as the Proton donor in catalysis. A Ca(2+)-binding site is contributed by D287.

The protein belongs to the glycosyl hydrolase 43 family. The cofactor is Ca(2+).

It localises to the secreted. The enzyme catalyses Endohydrolysis of (1-&gt;5)-alpha-arabinofuranosidic linkages in (1-&gt;5)-arabinans.. Its pathway is glycan metabolism; L-arabinan degradation. In terms of biological role, involved in the degradation of arabinan and is a key enzyme in the complete degradation of the plant cell wall. Catalyzes the internal cleavage of alpha-(1-&gt;5)-L-arabinofuranosyl residues of linear 1,5-alpha-L-arabinan and of branched sugar beet arabinan. It displays no activity against heavily substituted arabinans or a range of other polysaccharides (larch wood arabinogalactan, wheat arabinoxylan and p-nitrophenyl-alpha-L-arabinofuranoside). The enzyme activity is progressively reduced as alpha-(1-&gt;5)-chains become shorter or more highly substituted. This chain is Extracellular endo-alpha-(1-&gt;5)-L-arabinanase 1 (abnA), found in Bacillus subtilis (strain 168).